The following is a 195-amino-acid chain: MSQFKTGSRADCIGPARGSNFGPMSHSAVPATEVVIAADCWRSEASAEATVLRAIEAAAAMVDADTGEAELAVMLTDDDGIRALNASYRGQDKPTNVLSFPAPQPDYQGAAQGSDVAPKLLGDIAIAYQTVRREADDEGKRFDHHLSHLAVHGFLHLVGYDHETDAEAETMEAAERRILAGLGIPDPYADQDRVS.

3 residues coordinate Zn(2+): H152, H156, and H162.

The protein belongs to the endoribonuclease YbeY family. Requires Zn(2+) as cofactor.

The protein localises to the cytoplasm. In terms of biological role, single strand-specific metallo-endoribonuclease involved in late-stage 70S ribosome quality control and in maturation of the 3' terminus of the 16S rRNA. In Rhodopseudomonas palustris (strain HaA2), this protein is Endoribonuclease YbeY.